The sequence spans 146 residues: Hemoglobin subunit beta (146 aa).

The 145-residue stretch at 2–146 folds into the Globin domain; the sequence is HWSAEEKQLI…VAHALARKYH (145 aa). Heme b-binding residues include His-63 and His-92.

The protein belongs to the globin family. As to quaternary structure, heterotetramer of two alpha chains and two beta chains. Red blood cells.

Functionally, involved in oxygen transport from the lung to the various peripheral tissues. This Aptenodytes forsteri (Emperor penguin) protein is Hemoglobin subunit beta (HBB).